Reading from the N-terminus, the 249-residue chain is Triosephosphate isomerase (249 aa).

9–11 (NWK) contributes to the substrate binding site. His94 serves as the catalytic Electrophile. Glu166 acts as the Proton acceptor in catalysis. Substrate contacts are provided by residues Gly172, Ser214, and 235–236 (GG).

The protein belongs to the triosephosphate isomerase family. In terms of assembly, homodimer.

The protein localises to the cytoplasm. It carries out the reaction D-glyceraldehyde 3-phosphate = dihydroxyacetone phosphate. It participates in carbohydrate biosynthesis; gluconeogenesis. Its pathway is carbohydrate degradation; glycolysis; D-glyceraldehyde 3-phosphate from glycerone phosphate: step 1/1. Functionally, involved in the gluconeogenesis. Catalyzes stereospecifically the conversion of dihydroxyacetone phosphate (DHAP) to D-glyceraldehyde-3-phosphate (G3P). This is Triosephosphate isomerase from Leptospira biflexa serovar Patoc (strain Patoc 1 / Ames).